The primary structure comprises 126 residues: Thioredoxin domain-containing protein, mitochondrial (126 aa).

Positions 14-120 constitute a Thioredoxin domain; that stretch reads SQKIATNTSF…ILEFLNHIET (107 aa).

Belongs to the thioredoxin family.

It is found in the mitochondrion. This is Thioredoxin domain-containing protein, mitochondrial from Dictyostelium discoideum (Social amoeba).